Consider the following 345-residue polypeptide: Methylthioribose-1-phosphate isomerase (345 aa).

Substrate is bound by residues 47–49, arginine 90, and glutamine 199; that span reads RGA. Aspartate 240 serves as the catalytic Proton donor. Residue 250–251 participates in substrate binding; sequence NK.

This sequence belongs to the eIF-2B alpha/beta/delta subunits family. MtnA subfamily.

It carries out the reaction 5-(methylsulfanyl)-alpha-D-ribose 1-phosphate = 5-(methylsulfanyl)-D-ribulose 1-phosphate. Its pathway is amino-acid biosynthesis; L-methionine biosynthesis via salvage pathway; L-methionine from S-methyl-5-thio-alpha-D-ribose 1-phosphate: step 1/6. Its function is as follows. Catalyzes the interconversion of methylthioribose-1-phosphate (MTR-1-P) into methylthioribulose-1-phosphate (MTRu-1-P). The polypeptide is Methylthioribose-1-phosphate isomerase (Crocosphaera subtropica (strain ATCC 51142 / BH68) (Cyanothece sp. (strain ATCC 51142))).